Here is a 151-residue protein sequence, read N- to C-terminus: Potassium/proton antiporter CemA (151 aa).

2 consecutive transmembrane segments (helical) span residues 7-27 and 107-127; these read LPSL…SSSF and ILHF…FFLG.

This sequence belongs to the CemA family.

Its subcellular location is the plastid. The protein resides in the chloroplast inner membrane. It catalyses the reaction K(+)(in) + H(+)(out) = K(+)(out) + H(+)(in). Functionally, contributes to K(+)/H(+) antiport activity by supporting proton efflux to control proton extrusion and homeostasis in chloroplasts in a light-dependent manner to modulate photosynthesis. Prevents excessive induction of non-photochemical quenching (NPQ) under continuous-light conditions. Indirectly promotes efficient inorganic carbon uptake into chloroplasts. The chain is Potassium/proton antiporter CemA from Aegilops crassa (Persian goatgrass).